The chain runs to 460 residues: MGKEDKTHINVVVIGHVDSGKSTTTGHLIYKCGGIDKRTIEKFEKEAAELGKGSFKYAWVLDKLKAERERGITIDIALWKFETPKYYVTVIDAPGHRDFIKNMITGTSQADCAILIIAAGTGEFEAGISKDGQTREHALLAYTLGVKQLIVAINKMDTTQWSQTRFEEIIKETKNFIKKVGYNPAGVAFVPISGFNGDNMLEPSTNCPWYKGWEKETKAGKATGKTLLEAIDAIEPPKRPTDKPLRLPLQDVYKIGGIGTVPVGRIETGVLKPGMVVTFAPSNVTTEVKSVEMHHEQLAQGVPGDNVGFNVKNVSVKDIRRGNVAGDSKNDPPAGAASFTAQVIVLNHPGQVGAGYAPVLDCHTAHIACKFAELLEKIDRRTGKAVEASPKFIKSGDAAIVKMIPSKPMCVEAFTDYPPLGRFAVRDMRQTVAVGVIKAVDKSTAAAGKVTKSAAKAAKK.

At Gly-2 the chain carries N,N,N-trimethylglycine. Lys-3 bears the N6,N6-dimethyllysine; alternate mark. An N6-methyllysine; alternate modification is found at Lys-3. The 236-residue stretch at 6-241 folds into the tr-type G domain; it reads KTHINVVVIG…DAIEPPKRPT (236 aa). The G1 stretch occupies residues 15-22; sequence GHVDSGKS. 15 to 22 provides a ligand contact to GTP; it reads GHVDSGKS. An N6-methyllysine modification is found at Lys-31. Residues 71–75 form a G2 region; sequence GITID. Position 80 is an N6,N6,N6-trimethyllysine (Lys-80). The tract at residues 92 to 95 is G3; that stretch reads DAPG. GTP contacts are provided by residues 92 to 96 and 154 to 157; these read DAPGH and NKMD. The segment at 154–157 is G4; it reads NKMD. The tract at residues 193 to 195 is G5; it reads SGF. Residue Lys-317 is modified to N6,N6-dimethyllysine; alternate. Residue Lys-317 is modified to N6-methyllysine; alternate. Lys-391 is subject to N6-methyllysine.

This sequence belongs to the TRAFAC class translation factor GTPase superfamily. Classic translation factor GTPase family. EF-Tu/EF-1A subfamily.

It localises to the cytoplasm. Its function is as follows. This protein promotes the GTP-dependent binding of aminoacyl-tRNA to the A-site of ribosomes during protein biosynthesis. This chain is Elongation factor 1-alpha (tef-1), found in Neurospora crassa (strain ATCC 24698 / 74-OR23-1A / CBS 708.71 / DSM 1257 / FGSC 987).